A 537-amino-acid chain; its full sequence is Sodium/hydrogen exchanger 9B2 (537 aa).

Residues 1–10 show a composition bias toward basic and acidic residues; it reads MGDEDKRITY. The interval 1–33 is disordered; that stretch reads MGDEDKRITYEDSEPSTGMNYTPSMHQETQEET. Topologically, residues 1–86 are cytoplasmic; it reads MGDEDKRITY…ACPPHGLLDR (86 aa). Residues 15–27 are compositionally biased toward polar residues; that stretch reads PSTGMNYTPSMHQ. Serine 49 carries the phosphoserine modification. Residues 87–104 form a helical membrane-spanning segment; it reads VVTNVTIIVLLWAVIWSI. Residues 105 to 113 are Extracellular-facing; that stretch reads TGSECLPGG. A helical membrane pass occupies residues 114–133; sequence NLFGIIILFYCAIIGGKLLG. The Cytoplasmic segment spans residues 134–144; the sequence is LIKLPTLPPLP. The helical transmembrane segment at 145-161 threads the bilayer; that stretch reads SLLGMLLAGFLIRNIPV. Topologically, residues 162-171 are extracellular; the sequence is INDNVQIKHK. The chain crosses the membrane as a helical span at residues 172 to 189; the sequence is WSSSLRSIALSIILVRAG. The Cytoplasmic segment spans residues 190–200; the sequence is LGLDSKALKKL. Residues 201–227 form a helical membrane-spanning segment; it reads KGVCVRLSMGPCIVEACTSALLAHYLL. The Extracellular segment spans residues 228 to 233; the sequence is GLPWQW. A helical transmembrane segment spans residues 234–242; it reads GFILGFVLG. The Cytoplasmic segment spans residues 243 to 270; the sequence is AVSPAVVVPSMLLLQGGGYGVEKGVPTL. Positions 244, 275, 278, and 279 each coordinate Na(+). Residues 271 to 290 form a helical membrane-spanning segment; that stretch reads LMAAGSFDDILAITGFNTCL. Residues 291 to 300 are Extracellular-facing; sequence GIAFSTGSTV. The chain crosses the membrane as a helical span at residues 301–324; it reads FNVLRGVLEVVIGVATGSVLGFFI. Topologically, residues 325 to 339 are cytoplasmic; the sequence is QYFPSCDQDKLVCKR. Residues 340-357 form a helical membrane-spanning segment; that stretch reads TFLVLGLSVLAVFSSVHF. At 358–361 the chain is on the extracellular side; that stretch reads GFPG. Residues 362–373 traverse the membrane as a helical segment; it reads SGGLCTLVMAFL. The Cytoplasmic segment spans residues 374–390; it reads AGMGWTSEKAEVEKIIA. Residues 391 to 411 traverse the membrane as a helical segment; it reads VAWDIFQPLLFGLIGAEVSIA. Residues 412 to 417 lie on the Extracellular side of the membrane; that stretch reads SLRPET. Residues 418–440 form a helical membrane-spanning segment; sequence VGLCVATVGIAVLIRILTTFLMV. The Cytoplasmic portion of the chain corresponds to 441–461; sequence CFAGFNLKEKIFISFAWLPKA. The helical transmembrane segment at 462–473 threads the bilayer; the sequence is TVQAAIGSVALD. The Extracellular segment spans residues 474–486; it reads TARSHGEKQLEDY. Residues 487–509 traverse the membrane as a helical segment; that stretch reads GMDVLTVAFLSILITAPIGSLLI. The Cytoplasmic portion of the chain corresponds to 510 to 537; sequence GLLGPRLLQKVEHQNKDEEVQGETSVQV.

It belongs to the monovalent cation:proton antiporter 1 (CPA1) transporter (TC 2.A.36) family. Homodimer; dimerization is essential for SLC9B2 activity. Lipids seem to play a role in the stabilization of the dimerization subdomain.

The protein localises to the cell membrane. Its subcellular location is the mitochondrion membrane. It localises to the endosome membrane. The protein resides in the recycling endosome membrane. It is found in the cytoplasmic vesicle. The protein localises to the secretory vesicle. Its subcellular location is the synaptic vesicle membrane. It localises to the basolateral cell membrane. The protein resides in the apical cell membrane. The catalysed reaction is Li(+)(out) + H(+)(in) = Li(+)(in) + H(+)(out). It catalyses the reaction Li(+)(in) + Na(+)(out) = Li(+)(out) + Na(+)(in). It carries out the reaction Na(+)(in) + H(+)(out) = Na(+)(out) + H(+)(in). Allosterically inhibited by the N-terminal domain. Inhibited by phloretin. Its function is as follows. Electroneutral Na(+) Li(+)/H(+) antiporter that extrudes Na(+) or Li(+) in exchange for external protons across the membrane. Uses the proton gradient/membrane potential to extrude sodium. Contributes to the regulation of intracellular pH and sodium homeostasis. Also able to mediate Na(+)/Li(+) antiporter activity in kidney. May play a physiological role in renal tubular function and blood pressure homeostasis. Plays an important role for insulin secretion and clathrin-mediated endocytosis in beta-cells. Involved in sperm motility and fertility. It is controversial whether SLC9B2 plays a role in osteoclast differentiation or not. In Pongo abelii (Sumatran orangutan), this protein is Sodium/hydrogen exchanger 9B2 (SLC9B2).